The following is a 167-amino-acid chain: MTCCQTSFCGYPSCSTSGTCGSSCCQPSCCETSCCQPSCCQTSFCGFPSFSTSGTCSSSCCQPSCCETSCCQPSCCQTSSCGTGCGIGGGIGYGQEGSSGAVSTRIRWCRPDCRVEGTCLPPCCVVSCTPPTCCQLHHAEASCCRPSYCGQSCCRPVCCCYSCEPTC.

It belongs to the KRTAP type 1 family. In terms of assembly, interacts with hair keratins. In terms of tissue distribution, expressed in the middle/upper portions of the hair cortex, in the region termed the keratogenous zone.

In the hair cortex, hair keratin intermediate filaments are embedded in an interfilamentous matrix, consisting of hair keratin-associated proteins (KRTAP), which are essential for the formation of a rigid and resistant hair shaft through their extensive disulfide bond cross-linking with abundant cysteine residues of hair keratins. The matrix proteins include the high-sulfur and high-glycine-tyrosine keratins. The sequence is that of Keratin-associated protein 1-3 (KRTAP1-3) from Homo sapiens (Human).